Here is a 137-residue protein sequence, read N- to C-terminus: NADPH-dependent 7-cyano-7-deazaguanine reductase (137 aa).

Residue Cys45 is the Thioimide intermediate of the active site. Asp52 acts as the Proton donor in catalysis. Substrate-binding positions include 68–70 (VEL) and 87–88 (QE).

This sequence belongs to the GTP cyclohydrolase I family. QueF type 1 subfamily.

Its subcellular location is the cytoplasm. The catalysed reaction is 7-aminomethyl-7-carbaguanine + 2 NADP(+) = 7-cyano-7-deazaguanine + 2 NADPH + 3 H(+). The protein operates within tRNA modification; tRNA-queuosine biosynthesis. In terms of biological role, catalyzes the NADPH-dependent reduction of 7-cyano-7-deazaguanine (preQ0) to 7-aminomethyl-7-deazaguanine (preQ1). The chain is NADPH-dependent 7-cyano-7-deazaguanine reductase from Thermotoga petrophila (strain ATCC BAA-488 / DSM 13995 / JCM 10881 / RKU-1).